The following is a 91-amino-acid chain: Acylphosphatase (91 aa).

The Acylphosphatase-like domain occupies R4 to Y91. Active-site residues include R19 and N37.

It belongs to the acylphosphatase family.

It carries out the reaction an acyl phosphate + H2O = a carboxylate + phosphate + H(+). The protein is Acylphosphatase (acyP) of Clostridium acetobutylicum (strain ATCC 824 / DSM 792 / JCM 1419 / IAM 19013 / LMG 5710 / NBRC 13948 / NRRL B-527 / VKM B-1787 / 2291 / W).